The sequence spans 296 residues: MKHLDSLEAESIHILRETAAQFRKPVLMYSIGKDSSVLLHLARKAFYPSRPPFPFLHIDTTWKFHEMIAFRDKRVAEEGVDLIVHTNRAGVEAGVSPFTHGAAYTDIMKTQALREALTQGGFDGVIGGARRDEEKSRAKERVFSFRDAHHRWDPKNQRPELWNTYNGRVGKGESVRVFPLSNWTELDIWLYILRESIPVVPLYLAKPRPVVERDGALIMVDDNRLPLEPGETPQTRWVRFRTLGCYPLTGAIESRAASLPEIIAEMLVARTSERQGRLIDQDQAASMEMKKQEGYF.

Belongs to the PAPS reductase family. CysD subfamily. Heterodimer composed of CysD, the smaller subunit, and CysN.

It catalyses the reaction sulfate + ATP + H(+) = adenosine 5'-phosphosulfate + diphosphate. It participates in sulfur metabolism; hydrogen sulfide biosynthesis; sulfite from sulfate: step 1/3. With CysN forms the ATP sulfurylase (ATPS) that catalyzes the adenylation of sulfate producing adenosine 5'-phosphosulfate (APS) and diphosphate, the first enzymatic step in sulfur assimilation pathway. APS synthesis involves the formation of a high-energy phosphoric-sulfuric acid anhydride bond driven by GTP hydrolysis by CysN coupled to ATP hydrolysis by CysD. The chain is Sulfate adenylyltransferase subunit 2 from Rhodospirillum rubrum (strain ATCC 11170 / ATH 1.1.1 / DSM 467 / LMG 4362 / NCIMB 8255 / S1).